The chain runs to 120 residues: Glycophorin-A (120 aa).

Glutamine 1 carries the pyrrolidone carboxylic acid modification. The disordered stretch occupies residues 1 to 40 (QTIATGSPPIAGTSDLSTITSAATPTFTTEQDGREQGDGL). Threonine 2 and threonine 5 each carry an O-linked (GalNAc...) threonine glycan. The O-linked (GalNAc...) serine glycan is linked to serine 7. O-linked (GalNAc...) threonine glycosylation occurs at threonine 13. Residue serine 17 is glycosylated (O-linked (GalNAc...) serine). Residues 17–29 (STITSAATPTFTT) show a composition bias toward low complexity. O-linked (GalNAc...) threonine glycosylation is found at threonine 18 and threonine 20. Serine 21 is a glycosylation site (O-linked (GalNAc...) serine). 2 O-linked (GalNAc...) threonine glycosylation sites follow: threonine 24 and threonine 28. Residues 50–72 (VITVIILGVMAGIIGIILLLAYV) form a helical membrane-spanning segment. Residues 78 to 120 (KRPPADVPPPASTVPSADAPPPVSEDDETSLTSVETDYPGDSQ) form a disordered region. Residues 82–100 (ADVPPPASTVPSADAPPPV) are compositionally biased toward pro residues. Residues 107-120 (SLTSVETDYPGDSQ) are compositionally biased toward polar residues. Phosphoserine is present on serine 119.

The protein belongs to the glycophorin-A family. In terms of assembly, homodimer.

The protein resides in the membrane. In terms of biological role, glycophorin A is the major intrinsic membrane sialoglycoprotein of the erythrocyte. Appears to be important for the function of SLC4A1 and is required for high activity of SLC4A1. May be involved in translocation of SLC4A1 to the plasma membrane. The sequence is that of Glycophorin-A from Equus caballus (Horse).